A 340-amino-acid chain; its full sequence is Fructose-1,6-bisphosphatase class 1 (340 aa).

Positions 107, 126, 128, and 129 each coordinate Mg(2+). Position 215 (asparagine 215) interacts with substrate. Residue glutamate 287 participates in Mg(2+) binding.

It belongs to the FBPase class 1 family. Homotetramer. Mg(2+) serves as cofactor.

The protein localises to the cytoplasm. It catalyses the reaction beta-D-fructose 1,6-bisphosphate + H2O = beta-D-fructose 6-phosphate + phosphate. The protein operates within carbohydrate biosynthesis; gluconeogenesis. The protein is Fructose-1,6-bisphosphatase class 1 of Brucella suis (strain ATCC 23445 / NCTC 10510).